Consider the following 289-residue polypeptide: Beta-lactamase Toho-2 (289 aa).

The N-terminal stretch at 1 to 28 (MVTKRVQRMMSAAAACIPLLLGSPTLYA) is a signal peptide. Ser73 functions as the Acyl-ester intermediate in the catalytic mechanism. 235–237 (KTG) serves as a coordination point for substrate.

The protein belongs to the class-A beta-lactamase family.

The catalysed reaction is a beta-lactam + H2O = a substituted beta-amino acid. Its activity is regulated as follows. Inhibited 16-fold better by the beta-lactamase inhibitor tazobactam than by clavulanic acid. Its function is as follows. Hydrolyzes beta-lactam antibiotics such as penicillin G, carbenicillin, cephaloridine, cefoxitin, cefotaxime, ceftazidime, and aztreonam. Has especially increased relative hydrolysis rates for cephalothin, cephaloridine, cefotaxime and ceftizoxime. This is Beta-lactamase Toho-2 (bla) from Escherichia coli.